A 155-amino-acid polypeptide reads, in one-letter code: Ribonuclease H (155 aa).

Positions M1 to A146 constitute an RNase H type-1 domain. 4 residues coordinate Mg(2+): D9, E52, D74, and D138.

The protein belongs to the RNase H family. As to quaternary structure, monomer. The cofactor is Mg(2+).

Its subcellular location is the cytoplasm. It catalyses the reaction Endonucleolytic cleavage to 5'-phosphomonoester.. In terms of biological role, endonuclease that specifically degrades the RNA of RNA-DNA hybrids. The sequence is that of Ribonuclease H from Paracoccus denitrificans (strain Pd 1222).